Reading from the N-terminus, the 418-residue chain is D-amino acid dehydrogenase (418 aa).

Position 3 to 17 (V3 to W17) interacts with FAD.

This sequence belongs to the DadA oxidoreductase family. FAD serves as cofactor.

It carries out the reaction a D-alpha-amino acid + A + H2O = a 2-oxocarboxylate + AH2 + NH4(+). Oxidative deamination of D-amino acids. This chain is D-amino acid dehydrogenase, found in Neisseria meningitidis serogroup A / serotype 4A (strain DSM 15465 / Z2491).